We begin with the raw amino-acid sequence, 421 residues long: 4'-demethylrebeccamycin synthase (421 aa).

It belongs to the glycosyltransferase 28 family.

It catalyses the reaction 4'-demethylrebeccamycin + H2O = dichloroarcyriaflavin A + beta-D-glucose. The protein operates within alkaloid biosynthesis. Functionally, catalyzes the penultimate step in the biosynthesis of rebeccamycin, an indolocarbazole alkaloid that inhibits topoisomerase 1. Has a wide substrate range, including staurosporine aglycone, EJG-III-108A, J-104303, 6-N-methyl-arcyriaflavin and indolo-[2,3-a]-carbazole. This Lentzea aerocolonigenes (Lechevalieria aerocolonigenes) protein is 4'-demethylrebeccamycin synthase (rebG).